The chain runs to 432 residues: D-amino acid dehydrogenase (432 aa).

3–17 (VVILGSGVVGVASAW) contributes to the FAD binding site.

Belongs to the DadA oxidoreductase family. FAD serves as cofactor.

The enzyme catalyses a D-alpha-amino acid + A + H2O = a 2-oxocarboxylate + AH2 + NH4(+). It participates in amino-acid degradation; D-alanine degradation; NH(3) and pyruvate from D-alanine: step 1/1. In terms of biological role, oxidative deamination of D-amino acids. The protein is D-amino acid dehydrogenase of Escherichia coli O45:K1 (strain S88 / ExPEC).